The primary structure comprises 119 residues: Large ribosomal subunit protein bL20 (119 aa).

The protein belongs to the bacterial ribosomal protein bL20 family.

Functionally, binds directly to 23S ribosomal RNA and is necessary for the in vitro assembly process of the 50S ribosomal subunit. It is not involved in the protein synthesizing functions of that subunit. The protein is Large ribosomal subunit protein bL20 of Metamycoplasma arthritidis (strain 158L3-1) (Mycoplasma arthritidis).